Consider the following 148-residue polypeptide: Large ribosomal subunit protein bL9 (148 aa).

Belongs to the bacterial ribosomal protein bL9 family.

Its function is as follows. Binds to the 23S rRNA. This is Large ribosomal subunit protein bL9 from Pseudomonas syringae pv. tomato (strain ATCC BAA-871 / DC3000).